Consider the following 247-residue polypeptide: Probable transcriptional regulatory protein GSU1074 (247 aa).

Belongs to the TACO1 family.

It is found in the cytoplasm. The polypeptide is Probable transcriptional regulatory protein GSU1074 (Geobacter sulfurreducens (strain ATCC 51573 / DSM 12127 / PCA)).